Reading from the N-terminus, the 357-residue chain is Ribonuclease 3 (357 aa).

The 150-residue stretch at 6 to 155 (IKFIQDQIGY…ILGAIALDSN (150 aa)) folds into the RNase III domain. Residue E45 participates in Mg(2+) binding. D49 is a catalytic residue. The Mg(2+) site is built by D141 and E144. The active site involves E144. DRBM domains lie at 198–267 (PLHC…YLKD) and 285–355 (DSIG…FVLE).

The protein belongs to the ribonuclease III family. Homodimer. Mg(2+) is required as a cofactor.

The protein resides in the cytoplasm. The catalysed reaction is Endonucleolytic cleavage to 5'-phosphomonoester.. Functionally, digests double-stranded RNA. Involved in the processing of primary rRNA transcript to yield the immediate precursors to the large and small rRNAs (23S and 16S). Processes some mRNAs, and tRNAs when they are encoded in the rRNA operon. Processes pre-crRNA and tracrRNA of type II CRISPR loci if present in the organism. This Roseburia hominis (strain DSM 16839 / JCM 17582 / NCIMB 14029 / A2-183) protein is Ribonuclease 3 (rnc).